Reading from the N-terminus, the 556-residue chain is WD repeat-containing protein srw1 (556 aa).

Residues 1–80 form a disordered region; it reads MDEFDGFTRP…NEGDRFIPSR (80 aa). Residues 12-37 show a composition bias toward low complexity; it reads SSNSSANRNSNNSMNRVENNNSNSDS. The segment covering 43-55 has biased composition (basic and acidic residues); sequence SRGDAHTRMRQGF. S62 is subject to Phosphoserine. Residues 69–78 show a composition bias toward basic and acidic residues; it reads RTNEGDRFIP. A Phosphothreonine modification is found at T98. The span at 126-146 shows a compositional bias: polar residues; sequence TFNNSPIATPNTTIGVSTPRT. The interval 126–173 is disordered; that stretch reads TFNNSPIATPNTTIGVSTPRTDSGIDDIELTQRTPPSSSHTSSSILQN. Over residues 159–169 the composition is skewed to low complexity; sequence TPPSSSHTSSS. Phosphothreonine is present on T177. Residues S187 and S214 each carry the phosphoserine modification. WD repeat units follow at residues 246–285, 289–328, 331–368, 372–411, 414–456, 458–499, and 502–541; these read GLAG…VTVM, YPTD…KTRT, GHTE…HYFR, AHRQ…PLYS, NHIA…MLHN, DTGS…RVGT, and GHTD…SKHS.

This sequence belongs to the WD repeat CDC20/Fizzy family. Post-translationally, phosphorylated by cdc2-cdc13-CDK complex. This targets srw1 for proteolysis which in turn promotes cdc13 turnover. Dephosphorylated during G1 arrest.

It is found in the nucleus. Has a role in cell differentiation and cell cycling by negatively regulating cig2 and cdc12-associated cdc2. Down-regulates the level of cdc13, particularly in a nitrogen deprived environment. Regulator of cell cycle G1 phase progression. Prevents onset of mitosis during the pre-Start G1 period. Required for degradation of cdc13 mitotic cyclin B during G1 arrest but not during mitotic exit. The sequence is that of WD repeat-containing protein srw1 (srw1) from Schizosaccharomyces pombe (strain 972 / ATCC 24843) (Fission yeast).